Here is a 321-residue protein sequence, read N- to C-terminus: Gibberellin 2-beta-dioxygenase 4 (321 aa).

A Fe2OG dioxygenase domain is found at 156-269 (DSDSVLRVNH…RLSTAYFAGP (114 aa)). The Fe cation site is built by histidine 193, aspartate 195, and histidine 250. The active site involves arginine 260.

Belongs to the iron/ascorbate-dependent oxidoreductase family. GA2OX subfamily. Requires Fe(2+) as cofactor. As to expression, expressed at the base of the shoot apical meristem and developing leaf primordia.

It carries out the reaction gibberellin A1 + 2-oxoglutarate + O2 = gibberellin A8 + succinate + CO2. It participates in plant hormone biosynthesis; gibberellin biosynthesis. In terms of biological role, catalyzes the 2-beta-hydroxylation of several biologically active gibberellins, leading to the homeostatic regulation of their endogenous level. Catabolism of gibberellins (GAs) plays a central role in plant development. Converts GA9/GA20 to GA51/GA29 and GA4/GA1 to GA34/GA8. The protein is Gibberellin 2-beta-dioxygenase 4 (GA2OX4) of Arabidopsis thaliana (Mouse-ear cress).